Here is a 547-residue protein sequence, read N- to C-terminus: Chaperonin GroEL (547 aa).

ATP-binding positions include 30-33 (TLGP), K51, 87-91 (DGTTT), G415, and D495. The interval 526-547 (QDATPTASPDMGGMGGMGGGMM) is disordered. Residues 537-547 (GGMGGMGGGMM) show a composition bias toward gly residues.

The protein belongs to the chaperonin (HSP60) family. In terms of assembly, forms a cylinder of 14 subunits composed of two heptameric rings stacked back-to-back. Interacts with the co-chaperonin GroES.

It localises to the cytoplasm. The catalysed reaction is ATP + H2O + a folded polypeptide = ADP + phosphate + an unfolded polypeptide.. Its function is as follows. Together with its co-chaperonin GroES, plays an essential role in assisting protein folding. The GroEL-GroES system forms a nano-cage that allows encapsulation of the non-native substrate proteins and provides a physical environment optimized to promote and accelerate protein folding. In Vesicomyosocius okutanii subsp. Calyptogena okutanii (strain HA), this protein is Chaperonin GroEL.